The primary structure comprises 96 residues: Phosphoribosyl-ATP pyrophosphatase (96 aa).

It belongs to the PRA-PH family.

It localises to the cytoplasm. It carries out the reaction 1-(5-phospho-beta-D-ribosyl)-ATP + H2O = 1-(5-phospho-beta-D-ribosyl)-5'-AMP + diphosphate + H(+). The protein operates within amino-acid biosynthesis; L-histidine biosynthesis; L-histidine from 5-phospho-alpha-D-ribose 1-diphosphate: step 2/9. This is Phosphoribosyl-ATP pyrophosphatase from Methanobrevibacter smithii (strain ATCC 35061 / DSM 861 / OCM 144 / PS).